The primary structure comprises 699 residues: D-(-)-3-hydroxybutyrate oligomer hydrolase (699 aa).

An N-terminal signal peptide occupies residues 1-33 (MTAIRGGSRRAPGLALALLGGVLLGACHGDENA). The Charge relay system role is filled by Ser311.

It belongs to the D-(-)-3-hydroxybutyrate oligomer hydrolase family.

Its subcellular location is the secreted. It catalyses the reaction (3R)-hydroxybutanoate dimer + H2O = 2 (R)-3-hydroxybutanoate + H(+). Its pathway is lipid metabolism; butanoate metabolism. Participates in the degradation of poly-3-hydroxybutyrate (PHB). It works downstream of poly(3-hydroxybutyrate) depolymerase, hydrolyzing D(-)-3-hydroxybutyrate oligomers of various length (3HB-oligomers) into 3HB-monomers. This chain is D-(-)-3-hydroxybutyrate oligomer hydrolase, found in Burkholderia mallei (strain SAVP1).